A 320-amino-acid polypeptide reads, in one-letter code: tRNA dimethylallyltransferase (320 aa).

10–17 contacts ATP; it reads GPTASGKT. Residue 12–17 coordinates substrate; that stretch reads TASGKT. Interaction with substrate tRNA stretches follow at residues 35–38, 159–163, and 241–246; these read DSAL, QRIQR, and RCVGYR.

The protein belongs to the IPP transferase family. In terms of assembly, monomer. It depends on Mg(2+) as a cofactor.

The catalysed reaction is adenosine(37) in tRNA + dimethylallyl diphosphate = N(6)-dimethylallyladenosine(37) in tRNA + diphosphate. Its function is as follows. Catalyzes the transfer of a dimethylallyl group onto the adenine at position 37 in tRNAs that read codons beginning with uridine, leading to the formation of N6-(dimethylallyl)adenosine (i(6)A). The sequence is that of tRNA dimethylallyltransferase from Aromatoleum aromaticum (strain DSM 19018 / LMG 30748 / EbN1) (Azoarcus sp. (strain EbN1)).